Reading from the N-terminus, the 351-residue chain is Xaa-Pro dipeptidase (351 aa).

Positions 212, 223, 287, 316, and 330 each coordinate Co(2+).

This sequence belongs to the peptidase M24B family. Archaeal-type prolidase subfamily. Homodimer. Co(2+) serves as cofactor.

The protein resides in the cytoplasm. The enzyme catalyses Xaa-L-Pro dipeptide + H2O = an L-alpha-amino acid + L-proline. Its function is as follows. Splits dipeptides with a prolyl in the C-terminal position and a nonpolar amino acid at the N-terminal position. This chain is Xaa-Pro dipeptidase (pepQ), found in Pyrococcus horikoshii (strain ATCC 700860 / DSM 12428 / JCM 9974 / NBRC 100139 / OT-3).